The primary structure comprises 146 residues: Keratin-associated protein 12-2 (146 aa).

Repeat copies occupy residues 10–14 (CQPAC), 15–19 (CAPSP), 20–24 (CQPAC), 25–29 (CVPSS), 34–38 (CCVPV), 40–44 (CQSSV), 45–49 (CVPVS), 55–59 (CLPVS), 60–64 (CQSSV), 65–69 (CVPMS), 70–74 (FKSAV), 75–79 (CVPVS), 80–84 (CQSSV), 85–89 (CVPVS), 90–94 (CRPIV), 95–99 (CAAPS), 100–104 (CQSSL), 105–109 (CVPVS), 110–114 (CRPVV), 120–124 (CQSSG), 125–129 (CCQPS), 130–134 (CTSVL), and 135–139 (CRPIS). A 23 X 5 AA approximate repeats region spans residues 10–139 (CQPACCAPSP…CTSVLCRPIS (130 aa)).

Belongs to the KRTAP type 12 family. Interacts with hair keratins. In terms of tissue distribution, restricted to a narrow region of the hair fiber cuticle, lying approximately 20 cell layers above the apex of the dermal papilla of the hair root; not detected in any other tissues.

Functionally, in the hair cortex, hair keratin intermediate filaments are embedded in an interfilamentous matrix, consisting of hair keratin-associated proteins (KRTAP), which are essential for the formation of a rigid and resistant hair shaft through their extensive disulfide bond cross-linking with abundant cysteine residues of hair keratins. The matrix proteins include the high-sulfur and high-glycine-tyrosine keratins. The sequence is that of Keratin-associated protein 12-2 (KRTAP12-2) from Homo sapiens (Human).